The chain runs to 209 residues: Lipopolysaccharide export system protein LptC (209 aa).

Residues 7-26 form a helical membrane-spanning segment; the sequence is NIRWNVILGVIALCALAWFY.

It belongs to the LptC family. In terms of assembly, component of the lipopolysaccharide transport and assembly complex. Interacts with LptA and the LptBFG transporter complex.

The protein resides in the cell inner membrane. In terms of biological role, involved in the assembly of lipopolysaccharide (LPS). Required for the translocation of LPS from the inner membrane to the outer membrane. Facilitates the transfer of LPS from the inner membrane to the periplasmic protein LptA. Could be a docking site for LptA. This is Lipopolysaccharide export system protein LptC from Haemophilus influenzae (strain ATCC 51907 / DSM 11121 / KW20 / Rd).